The sequence spans 333 residues: Succinylglutamate desuccinylase (333 aa).

The Zn(2+) site is built by histidine 56, glutamate 59, and histidine 149. Residue glutamate 214 is part of the active site.

This sequence belongs to the AspA/AstE family. Succinylglutamate desuccinylase subfamily. It depends on Zn(2+) as a cofactor.

It catalyses the reaction N-succinyl-L-glutamate + H2O = L-glutamate + succinate. It participates in amino-acid degradation; L-arginine degradation via AST pathway; L-glutamate and succinate from L-arginine: step 5/5. Functionally, transforms N(2)-succinylglutamate into succinate and glutamate. This chain is Succinylglutamate desuccinylase, found in Chromobacterium violaceum (strain ATCC 12472 / DSM 30191 / JCM 1249 / CCUG 213 / NBRC 12614 / NCIMB 9131 / NCTC 9757 / MK).